The following is a 179-amino-acid chain: Inner membrane-spanning protein YciB (179 aa).

Helical transmembrane passes span 22–42 (IYAA…YSWV), 50–70 (MALI…FFHN), 76–96 (WKVT…QWVM), 121–141 (LAWA…AFWL), and 149–169 (FKVF…GIYI).

The protein belongs to the YciB family.

It is found in the cell inner membrane. Functionally, plays a role in cell envelope biogenesis, maintenance of cell envelope integrity and membrane homeostasis. In Escherichia coli O127:H6 (strain E2348/69 / EPEC), this protein is Inner membrane-spanning protein YciB.